Reading from the N-terminus, the 509-residue chain is Maturase K (509 aa).

The protein belongs to the intron maturase 2 family. MatK subfamily.

It is found in the plastid. The protein resides in the chloroplast. Functionally, usually encoded in the trnK tRNA gene intron. Probably assists in splicing its own and other chloroplast group II introns. This chain is Maturase K, found in Vachellia farnesiana (Sweet acacia).